A 212-amino-acid polypeptide reads, in one-letter code: Peroxisomal membrane protein 4 (212 aa).

A run of 2 helical transmembrane segments spans residues 97 to 117 and 153 to 173; these read GKTY…LVFG and LDPF…LFEY. N-linked (GlcNAc...) asparagine glycosylation occurs at Asn-206.

This sequence belongs to the peroxisomal membrane protein PXMP2/4 family. Interacts with PEX19.

It localises to the peroxisome membrane. The polypeptide is Peroxisomal membrane protein 4 (PXMP4) (Bos taurus (Bovine)).